We begin with the raw amino-acid sequence, 2220 residues long: Non-reducing polyketide synthase stbA (2220 aa).

The N-terminal acylcarrier protein transacylase domain (SAT) stretch occupies residues 10 to 255 (IFSPQNSPPK…HDATNTDMAQ (246 aa)). In terms of domain architecture, Ketosynthase family 3 (KS3) spans 379–803 (SDAIAVVGAG…GSNSALICSE (425 aa)). Active-site for beta-ketoacyl synthase activity residues include cysteine 551, histidine 687, and histidine 726. Positions 906–1207 (LAFSGQSRTN…ADATQHTFQA (302 aa)) are malonyl-CoA:ACP transacylase (MAT) domain. The For acyl/malonyl transferase activity role is filled by serine 993. An N-terminal hotdog fold region spans residues 1287–1414 (EPRAAQLVRY…GDFTMTAGPH (128 aa)). The PKS/mFAS DH domain maps to 1287–1589 (EPRAAQLVRY…FHKTSMTKLL (303 aa)). Residues 1292 to 1588 (QLVRYKGALG…HFHKTSMTKL (297 aa)) are product template (PT) domain. The Proton acceptor; for dehydratase activity role is filled by histidine 1323. Positions 1436 to 1589 (DAEKLRKRTA…FHKTSMTKLL (154 aa)) are C-terminal hotdog fold. Aspartate 1500 functions as the Proton donor; for dehydratase activity in the catalytic mechanism. 2 consecutive Carrier domains span residues 1634 to 1711 (AAGP…SGGA) and 1742 to 1821 (PAGP…AADV). Residues serine 1671 and serine 1779 each carry the O-(pantetheine 4'-phosphoryl)serine modification. The segment at 1879–2210 (TRFRMETVVY…YDFIFTELEN (332 aa)) is thioesterase (TE) domain. Active-site for thioesterase activity residues include serine 1999 and aspartate 2148.

The catalysed reaction is 3 malonyl-CoA + acetyl-CoA + 2 H(+) = orsellinate + 3 CO2 + 4 CoA. The protein operates within secondary metabolite biosynthesis; terpenoid biosynthesis. Functionally, non-reducing polyketide synthase; part of the cluster that mediates the biosynthesis of LL-Z1272-beta, also known as ilicicolin B, a prenylated aryl-aldehyde produced by several fungi and that serves as a key pathway intermediate for many fungal meroterpenoids. The first step in the pathway is performed by the non-reducing polyketide synthase stbA that produces orsellinic acid by condensing acetyl-CoA with 3 malonyl-CoA units. The prenyltransferase stbC then prenylates orsenilic acid into grifolic acid. Finally, grifolic acid is reduced to ilicicolin B by the NRPS-like protein stbB. The sequence is that of Non-reducing polyketide synthase stbA from Stachybotrys bisbyi (Hyalostachybotrys bisbyi).